The following is a 203-amino-acid chain: CASP-like protein 4B2 (203 aa).

The Cytoplasmic segment spans residues 1–57 (MAMVTADASAAADAATKQPDVEKDYSSYNGASTAGAGGGGVVESVVARWRREDMLDK). A helical transmembrane segment spans residues 58 to 78 (CPLALHAAAAAFAFVALVLVA). The Extracellular segment spans residues 79-92 (SNQHGDWMQFDRYQ). Residues 93–113 (EYMYLLAIAALAFAYSLAQAL) form a helical membrane-spanning segment. At 114–135 (RHAHRMRGGADPIPAPSARLFD) the chain is on the cytoplasmic side. The chain crosses the membrane as a helical span at residues 136 to 156 (FIADQVVAYLLMSALSAAIPI). Residues 157–171 (TNRMRTAVINNFTDA) lie on the Extracellular side of the membrane. Residue Asn-167 is glycosylated (N-linked (GlcNAc...) asparagine). A helical transmembrane segment spans residues 172-192 (TAAAISMAFLAFVALALSATV). The Cytoplasmic segment spans residues 193–203 (SGYKLSRQMYM).

This sequence belongs to the Casparian strip membrane proteins (CASP) family. In terms of assembly, homodimer and heterodimers.

The protein localises to the cell membrane. The sequence is that of CASP-like protein 4B2 from Hordeum vulgare subsp. vulgare (Domesticated barley).